The following is a 367-amino-acid chain: Ataxin-7-like protein 3 (367 aa).

An SGF11-type zinc finger spans residues 84–105 (CVCPNCSRSIAASRFAPHLEKC). Residues 116-125 (ANRRIASSNN) show a composition bias toward low complexity. The segment at 116-184 (ANRRIASSNN…GELSGSVNPD (69 aa)) is disordered. A compositionally biased stretch (acidic residues) spans 132–141 (DQEDNDDIND). The SCA7 domain occupies 199 to 266 (LGPEELRSIL…TMLENEAYEP (68 aa)). The span at 280-299 (ASSDISPSDSASSKASTNNS) shows a compositional bias: low complexity. Residues 280-367 (ASSDISPSDS…PAPSIYDDLN (88 aa)) are disordered. The span at 318–329 (GERDKAQERDRI) shows a compositional bias: basic and acidic residues. The span at 330-346 (AGSGSSGSSSQNALGLS) shows a compositional bias: low complexity.

It belongs to the SGF11 family. Component of some SAGA transcription coactivator-HAT complexes. Within the SAGA complex, participates in a subcomplex of SAGA called the DUB module (deubiquitination module).

It localises to the nucleus. Functionally, component of the transcription regulatory histone acetylation (HAT) complex SAGA, a multiprotein complex that activates transcription by remodeling chromatin and mediating histone acetylation and deubiquitination. Within the SAGA complex, participates in a subcomplex that specifically deubiquitinates histone H2B. The SAGA complex is recruited to specific gene promoters by activators, where it is required for transcription. The polypeptide is Ataxin-7-like protein 3 (atxn7l3) (Danio rerio (Zebrafish)).